We begin with the raw amino-acid sequence, 447 residues long: Glutamate--tRNA ligase 1 (447 aa).

Residues 10–20 carry the 'HIGH' region motif; sequence PSPTGMLHVGN. The 'KMSKS' region motif lies at 240-244; the sequence is KISKR. Lys243 is a binding site for ATP.

Belongs to the class-I aminoacyl-tRNA synthetase family. Glutamate--tRNA ligase type 1 subfamily. Monomer.

The protein resides in the cytoplasm. The catalysed reaction is tRNA(Glu) + L-glutamate + ATP = L-glutamyl-tRNA(Glu) + AMP + diphosphate. In terms of biological role, catalyzes the attachment of glutamate to tRNA(Glu) in a two-step reaction: glutamate is first activated by ATP to form Glu-AMP and then transferred to the acceptor end of tRNA(Glu). This Rickettsia akari (strain Hartford) protein is Glutamate--tRNA ligase 1.